Reading from the N-terminus, the 436-residue chain is WD repeat domain phosphoinositide-interacting protein 2 (436 aa).

A WD 1 repeat occupies 182 to 222 (AHDSPLAALAFDASGTKLATASEKGTVIRVFSIPEGQKLFE). A L/FRRG motif motif is present at residues 223 to 226 (FRRG). WD repeat units follow at residues 228 to 267 (KRCV…EKPQ) and 311 to 349 (GHKN…GGEC).

This sequence belongs to the WD repeat PROPPIN family.

It is found in the preautophagosomal structure membrane. Functionally, component of the autophagy machinery that controls the major intracellular degradation process by which cytoplasmic materials are packaged into autophagosomes and delivered to lysosomes for degradation. Involved in an early step of the formation of preautophagosomal structures. The polypeptide is WD repeat domain phosphoinositide-interacting protein 2 (WIPI2) (Gallus gallus (Chicken)).